A 67-amino-acid polypeptide reads, in one-letter code: Protein AaeX (67 aa).

Transmembrane regions (helical) follow at residues 10-30 and 43-63; these read FGLSFPPVFFVLMVSLTLFFV and FVWHPALFNSALFCCLFYLLF.

The protein belongs to the AaeX family.

It is found in the cell membrane. The chain is Protein AaeX from Pectobacterium atrosepticum (strain SCRI 1043 / ATCC BAA-672) (Erwinia carotovora subsp. atroseptica).